Reading from the N-terminus, the 829-residue chain is Exocyst complex component SEC10b (829 aa).

The stretch at 244-266 (RGLEVAVANLQDYCNELENRLLS) forms a coiled coil.

The protein belongs to the SEC10 family. In terms of assembly, the exocyst complex is composed of SEC3, SEC5, SEC6, SEC8, SEC10, EXO70A1 and EXO84B. Interacts with EXO84B. Binds to EXO70E2. Expressed in seedlings, roots, leaves and flowers.

It localises to the cytoplasm. The protein localises to the cytosol. Its subcellular location is the secreted. The protein resides in the extracellular exosome. Its function is as follows. Component of the exocyst complex involved in the docking of exocytic vesicles with fusion sites on the plasma membrane during regulated or polarized secretion. Involved in polarized cell growth and organ morphogenesis. During cytokinesis, involved in cell plate initiation, cell plate maturation and formation of new primary cell wall. The chain is Exocyst complex component SEC10b from Arabidopsis thaliana (Mouse-ear cress).